A 163-amino-acid polypeptide reads, in one-letter code: Small ribosomal subunit protein uS9 (163 aa).

Residues 1–41 are disordered; the sequence is MAENTNDSAVLETEEELTSYTTETNAGAGTGTSTIAPGYGT. Positions 18–38 are enriched in low complexity; that stretch reads TSYTTETNAGAGTGTSTIAPG.

This sequence belongs to the universal ribosomal protein uS9 family.

The sequence is that of Small ribosomal subunit protein uS9 from Bifidobacterium adolescentis (strain ATCC 15703 / DSM 20083 / NCTC 11814 / E194a).